The primary structure comprises 518 residues: Glucose-1-phosphate adenylyltransferase large subunit 2, cytosolic (518 aa).

The protein belongs to the bacterial/plant glucose-1-phosphate adenylyltransferase family. Heterotetramer composed of two small and two large subunits.

It localises to the cytoplasm. It is found in the cytosol. The catalysed reaction is alpha-D-glucose 1-phosphate + ATP + H(+) = ADP-alpha-D-glucose + diphosphate. It participates in glycan biosynthesis; starch biosynthesis. Its activity is regulated as follows. Activated by 3'phosphoglycerate, inhibited by orthophosphate. Allosteric regulation. Inhibited by inorganic phosphate (Pi). Its function is as follows. Involved in synthesis of starch. Catalyzes the synthesis of ADP-glucose, a molecule that serves as an activated glycosyl donor for alpha-1,4-glucan synthesis. Essential for starch synthesis in seed endosperm. Is essential for both catalytic and allosteric regulatory properties of the cytosolic heterotetramer enzyme. This is Glucose-1-phosphate adenylyltransferase large subunit 2, cytosolic from Oryza sativa subsp. japonica (Rice).